Reading from the N-terminus, the 434-residue chain is Trigger factor (434 aa).

One can recognise a PPIase FKBP-type domain in the interval 162 to 247; that stretch reads GDKINISLIA…FNTVEQAKLP (86 aa).

The protein belongs to the FKBP-type PPIase family. Tig subfamily.

It is found in the cytoplasm. It carries out the reaction [protein]-peptidylproline (omega=180) = [protein]-peptidylproline (omega=0). Functionally, involved in protein export. Acts as a chaperone by maintaining the newly synthesized protein in an open conformation. Functions as a peptidyl-prolyl cis-trans isomerase. This is Trigger factor from Methylobacillus flagellatus (strain ATCC 51484 / DSM 6875 / VKM B-1610 / KT).